The primary structure comprises 502 residues: Maturase K (502 aa).

This sequence belongs to the intron maturase 2 family. MatK subfamily.

It is found in the plastid. It localises to the chloroplast. Its function is as follows. Usually encoded in the trnK tRNA gene intron. Probably assists in splicing its own and other chloroplast group II introns. This chain is Maturase K, found in Sisymbrium irio (London rocket).